The sequence spans 129 residues: Small ribosomal subunit protein uS9 (129 aa).

The protein belongs to the universal ribosomal protein uS9 family.

This Nitratiruptor sp. (strain SB155-2) protein is Small ribosomal subunit protein uS9.